A 462-amino-acid polypeptide reads, in one-letter code: Anthranilate synthase component 1 (462 aa).

L-tryptophan is bound by residues serine 37 and 244-246; that span reads PYM. A chorismate-binding site is contributed by 279–280; sequence GT. Glutamate 306 provides a ligand contact to Mg(2+). Chorismate-binding positions include tyrosine 394, arginine 414, 428–430, and glycine 430; that span reads GAG. Glutamate 443 lines the Mg(2+) pocket.

Belongs to the anthranilate synthase component I family. As to quaternary structure, heterotetramer consisting of two non-identical subunits: a beta subunit (TrpG) and a large alpha subunit (TrpE). It depends on Mg(2+) as a cofactor.

It carries out the reaction chorismate + L-glutamine = anthranilate + pyruvate + L-glutamate + H(+). Its pathway is amino-acid biosynthesis; L-tryptophan biosynthesis; L-tryptophan from chorismate: step 1/5. Feedback inhibited by tryptophan. Functionally, part of a heterotetrameric complex that catalyzes the two-step biosynthesis of anthranilate, an intermediate in the biosynthesis of L-tryptophan. In the first step, the glutamine-binding beta subunit (TrpG) of anthranilate synthase (AS) provides the glutamine amidotransferase activity which generates ammonia as a substrate that, along with chorismate, is used in the second step, catalyzed by the large alpha subunit of AS (TrpE) to produce anthranilate. In the absence of TrpG, TrpE can synthesize anthranilate directly from chorismate and high concentrations of ammonia. In Thermus thermophilus (strain ATCC 27634 / DSM 579 / HB8), this protein is Anthranilate synthase component 1 (trpE).